The following is a 1997-amino-acid chain: Otoferlin (1997 aa).

The C2 1 domain occupies 1 to 98 (MALLIHLKTV…VEESHVEVTD (98 aa)). At 1–1963 (MALLIHLKTV…ARYFLWHTYR (1963 aa)) the chain is on the cytoplasmic side. The tract at residues 128–171 (WDDGDFLGDESLQEEEKDSQETDGLLPGSRPSSRPPGEKSFRRA) is disordered. Over residues 129 to 145 (DDGDFLGDESLQEEEKD) the composition is skewed to acidic residues. C2 domains follow at residues 236-357 (KRSK…HKWA) and 400-531 (IEGN…FLPT). Residues 642 to 694 (NEVDGLSRPQRPRPRKEPGDEEEVDLIQNASDDEAGDAGDLASVSSTPPMRPQ) are disordered. The segment covering 660–678 (GDEEEVDLIQNASDDEAGD) has biased composition (acidic residues). Residues 792–821 (RERLKSCMRELENMGQQARMLRAQVKRHTV) are a coiled coil. C2 domains lie at 944–1069 (LHAF…PPRF) and 1115–1242 (DRGP…PSWN). Ca(2+)-binding residues include Asp976, Asp982, Asp1038, Asp1040, and Asp1046. 2 disordered regions span residues 1299 to 1324 (AEEEKEKKKKKKGTAEEPEEEEPDES) and 1343 to 1405 (LRQQ…KPKI). Acidic residues-rich tracts occupy residues 1314–1324 (EEPEEEEPDES) and 1352–1361 (DLEEKEEVDN). The segment covering 1370–1383 (KGKEKARAAKEEKK) has biased composition (basic and acidic residues). Positions 1387-1396 (QSSGSGQGSE) are enriched in low complexity. 2 consecutive C2 domains span residues 1464-1593 (LPED…ATCG) and 1714-1865 (DMPA…KQCT). Ca(2+)-binding residues include Asp1508, Asp1514, Asp1563, Asp1565, Asp1571, Asp1836, Ser1839, and Asp1842. The helical transmembrane segment at 1964 to 1984 (WLLLKLLLLLLLLLLLALFLY) threads the bilayer. Topologically, residues 1985-1997 (SVPGYLVKKILGA) are extracellular.

This sequence belongs to the ferlin family. As to quaternary structure, interacts with SNAP2; the interaction is direct. Interacts with STX1; the interaction is direct. Interacts with RAB8B. Requires Ca(2+) as cofactor. In terms of tissue distribution, isoform 1 and isoform 3 are found in adult brain. Isoform 2 is expressed in the fetus and in adult brain, heart, placenta, skeletal muscle and kidney.

It is found in the cytoplasmic vesicle. It localises to the secretory vesicle. The protein localises to the synaptic vesicle membrane. The protein resides in the basolateral cell membrane. Its subcellular location is the endoplasmic reticulum membrane. It is found in the golgi apparatus membrane. It localises to the presynaptic cell membrane. The protein localises to the cell membrane. In terms of biological role, key calcium ion sensor involved in the Ca(2+)-triggered synaptic vesicle-plasma membrane fusion and in the control of neurotransmitter release at these output synapses. Interacts in a calcium-dependent manner to the presynaptic SNARE proteins at ribbon synapses of cochlear inner hair cells (IHCs) to trigger exocytosis of neurotransmitter. Also essential to synaptic exocytosis in immature outer hair cells (OHCs). May also play a role within the recycling of endosomes. This Homo sapiens (Human) protein is Otoferlin (OTOF).